The sequence spans 131 residues: Ribosome-binding factor A (131 aa).

It belongs to the RbfA family. Monomer. Binds 30S ribosomal subunits, but not 50S ribosomal subunits or 70S ribosomes.

It localises to the cytoplasm. One of several proteins that assist in the late maturation steps of the functional core of the 30S ribosomal subunit. Associates with free 30S ribosomal subunits (but not with 30S subunits that are part of 70S ribosomes or polysomes). Required for efficient processing of 16S rRNA. May interact with the 5'-terminal helix region of 16S rRNA. The protein is Ribosome-binding factor A of Gloeothece citriformis (strain PCC 7424) (Cyanothece sp. (strain PCC 7424)).